Consider the following 382-residue polypeptide: Neuropeptide Y receptor type 1 (382 aa).

The Extracellular portion of the chain corresponds to 1–33 (MNSTLFSRVENYSVHYNVSENSPFLAFENDDCH). Asn2, Asn11, and Asn17 each carry an N-linked (GlcNAc...) asparagine glycan. Residues 34–54 (LPLAVIFTLALAYGAVIILGV) traverse the membrane as a helical segment. Residues 55-75 (SGNLALIIIILKQKEMRNVTN) are Cytoplasmic-facing. A helical membrane pass occupies residues 76–96 (ILIVNLSFSDLLVAVMCLPFT). Topologically, residues 97-115 (FVYTLMDHWVFGETMCKLN) are extracellular. Cys112 and Cys197 are joined by a disulfide. The helical transmembrane segment at 116-136 (PFVQCVSITVSIFSLVLIAVE) threads the bilayer. Over 137-153 (RHQLIINPRGWRPNNRH) the chain is Cytoplasmic. The chain crosses the membrane as a helical span at residues 154-174 (AYIGITVIWVLAVASSLPFVI). The Extracellular segment spans residues 175 to 210 (YQILTDEPFQNVSLAAFKDKYVCFDKFPSDSHRLSY). A helical membrane pass occupies residues 211–231 (TTLLLVLQYFGPLCFIFICYF). Residues 232-259 (KIYIRLKRRNNMMDKIRDSKYRSSETKR) are Cytoplasmic-facing. A helical transmembrane segment spans residues 260-280 (INVMLLSIVVAFAVCWLPLTI). Topologically, residues 281 to 298 (FNTVFDWNHQIIATCNHN) are extracellular. A helical transmembrane segment spans residues 299–319 (LLFLLCHLTAMISTCVNPIFY). At 320–382 (GFLNKNFQRD…KISMNDNEKI (63 aa)) the chain is on the cytoplasmic side. Cys337 is lipidated: S-palmitoyl cysteine. A phosphoserine mark is found at Ser367 and Ser375.

It belongs to the G-protein coupled receptor 1 family. Brain.

It is found in the cell membrane. Receptor for neuropeptide Y and peptide YY. In Rattus norvegicus (Rat), this protein is Neuropeptide Y receptor type 1 (Npy1r).